The sequence spans 543 residues: ATP-dependent ubiquitin transferase-like protein Cap2 (543 aa).

Positions methionine 1 to glycine 159 are E2-like domain. Cysteine 84 (for E2-like domain) is an active-site residue. The interval cysteine 160–serine 305 is linker domain. The segment at lysine 306 to serine 543 is adenylation plus E1-like domain. Active-site for E1-like domain residues include cysteine 450 and cysteine 453.

The protein in the C-terminal section; belongs to the HesA/MoeB/ThiF family. Forms a Cap2-CdnA complex. A Cap2 dimer is bound on either side by a CdnA monomer.

Functionally, CD-NTase priming component of a CBASS antiviral system. CBASS (cyclic oligonucleotide-based antiphage signaling system) provides immunity against bacteriophages. The CD-NTase protein (CdnA) synthesizes cyclic nucleotides in response to infection; these serve as specific second messenger signals. The signals activate a diverse range of effectors, leading to bacterial cell death and thus abortive phage infection. A type II-A(GA) CBASS system. Acts as a protein transferase, conjugating CdnA, the CD-NTase, to unidentified target(s) in the cell probably via an E1-E2 ubiquitin transferase-like mechanism. This primes CdnA, upon phage infection CdnA activates and makes cyclic nucleotides. Protein conjugation requires ATP. Its function is as follows. The capV-cdnA-cap2-cap3 operon provides about 10(4)-fold protection in strain BWHPSA011 against infection by phage PaMx41. In P.aeruginosa strain PAO1 it confers protection against phages PaMx41 and JBD18 but not JBD67 (JBD18 and JBD67 do not replicate in BWHPSA011 / Pa011). When acb2 in JBD67 is deleted this CBASS operon then protects against JDB67 also. This CBASS system limits prophage induction of lysogenized JBD67 as well as viral lytic replication. The sequence is that of ATP-dependent ubiquitin transferase-like protein Cap2 from Pseudomonas aeruginosa (strain BWHPSA011 / Pa011).